A 118-amino-acid polypeptide reads, in one-letter code: Hydrogenase maturation factor HypA (118 aa).

Residue histidine 2 coordinates Ni(2+). Residues cysteine 73, cysteine 76, cysteine 93, and cysteine 96 each coordinate Zn(2+).

Belongs to the HypA/HybF family.

Functionally, involved in the maturation of [NiFe] hydrogenases. Required for nickel insertion into the metal center of the hydrogenase. This Lawsonia intracellularis (strain PHE/MN1-00) protein is Hydrogenase maturation factor HypA.